The sequence spans 762 residues: Phosphoribosylformylglycinamidine synthase subunit PurL (762 aa).

Residue His-58 is part of the active site. 2 residues coordinate ATP: Tyr-61 and Arg-105. Position 107 (Glu-107) interacts with Mg(2+). Substrate is bound by residues 108-111 (SHNH) and Arg-130. Catalysis depends on His-109, which acts as the Proton acceptor. Mg(2+) is bound at residue Asp-131. Residue Gln-255 participates in substrate binding. Asp-283 is a Mg(2+) binding site. 327-329 (ESQ) is a binding site for substrate. Positions 513 and 550 each coordinate ATP. Position 551 (Asn-551) interacts with Mg(2+). Ser-553 is a substrate binding site.

This sequence belongs to the FGAMS family. As to quaternary structure, monomer. Part of the FGAM synthase complex composed of 1 PurL, 1 PurQ and 2 PurS subunits.

The protein resides in the cytoplasm. It catalyses the reaction N(2)-formyl-N(1)-(5-phospho-beta-D-ribosyl)glycinamide + L-glutamine + ATP + H2O = 2-formamido-N(1)-(5-O-phospho-beta-D-ribosyl)acetamidine + L-glutamate + ADP + phosphate + H(+). It functions in the pathway purine metabolism; IMP biosynthesis via de novo pathway; 5-amino-1-(5-phospho-D-ribosyl)imidazole from N(2)-formyl-N(1)-(5-phospho-D-ribosyl)glycinamide: step 1/2. Its function is as follows. Part of the phosphoribosylformylglycinamidine synthase complex involved in the purines biosynthetic pathway. Catalyzes the ATP-dependent conversion of formylglycinamide ribonucleotide (FGAR) and glutamine to yield formylglycinamidine ribonucleotide (FGAM) and glutamate. The FGAM synthase complex is composed of three subunits. PurQ produces an ammonia molecule by converting glutamine to glutamate. PurL transfers the ammonia molecule to FGAR to form FGAM in an ATP-dependent manner. PurS interacts with PurQ and PurL and is thought to assist in the transfer of the ammonia molecule from PurQ to PurL. In Corynebacterium glutamicum (strain R), this protein is Phosphoribosylformylglycinamidine synthase subunit PurL.